Consider the following 350-residue polypeptide: Outer membrane protein A (350 aa).

The first 21 residues, 1-21, serve as a signal peptide directing secretion; the sequence is MKKTAIAIAVALAGFATVAQA. Transmembrane regions (beta stranded) follow at residues 27-37, 55-66, 70-78, 96-107, 112-120, 146-155, 160-167, and 186-194; these read TWYAGAKLGWS, QLGAGAFGGYQV, VGFEMGYDW, QGVQLTAKLGYP, LDVYTRLGG, PVFAGGIEYA, IATRLEYQ, and LLSVGVSYR. Tandem repeats lie at residues 205–206, 207–208, 209–210, and 211–212. The segment at 205–212 is 4 X 2 AA tandem repeats of A-P; it reads APAPAPAP. The region spanning 214–342 is the OmpA-like domain; that stretch reads VQTKHFTLKS…RVEIEVKGVK (129 aa). Cysteine 315 and cysteine 327 are disulfide-bonded.

This sequence belongs to the outer membrane OOP (TC 1.B.6) superfamily. OmpA family. In terms of assembly, monomer and homodimer.

It localises to the cell outer membrane. In terms of biological role, with TolR probably plays a role in maintaining the position of the peptidoglycan cell wall in the periplasm. Acts as a porin with low permeability that allows slow penetration of small solutes; an internal gate slows down solute passage. Its function is as follows. Required for conjugation with F-type plasmids; probably serves as the mating receptor on recipient cells. The protein is Outer membrane protein A of Salmonella typhi.